We begin with the raw amino-acid sequence, 242 residues long: Biosynthetic peptidoglycan transglycosylase (242 aa).

The chain crosses the membrane as a helical span at residues 19 to 39 (LMVVLAIFWGGGIALFSVAPV).

This sequence belongs to the glycosyltransferase 51 family.

The protein resides in the cell inner membrane. It carries out the reaction [GlcNAc-(1-&gt;4)-Mur2Ac(oyl-L-Ala-gamma-D-Glu-L-Lys-D-Ala-D-Ala)](n)-di-trans,octa-cis-undecaprenyl diphosphate + beta-D-GlcNAc-(1-&gt;4)-Mur2Ac(oyl-L-Ala-gamma-D-Glu-L-Lys-D-Ala-D-Ala)-di-trans,octa-cis-undecaprenyl diphosphate = [GlcNAc-(1-&gt;4)-Mur2Ac(oyl-L-Ala-gamma-D-Glu-L-Lys-D-Ala-D-Ala)](n+1)-di-trans,octa-cis-undecaprenyl diphosphate + di-trans,octa-cis-undecaprenyl diphosphate + H(+). Its pathway is cell wall biogenesis; peptidoglycan biosynthesis. In terms of biological role, peptidoglycan polymerase that catalyzes glycan chain elongation from lipid-linked precursors. This chain is Biosynthetic peptidoglycan transglycosylase, found in Escherichia coli O81 (strain ED1a).